Here is a 287-residue protein sequence, read N- to C-terminus: Undecaprenyl-diphosphatase (287 aa).

7 helical membrane-spanning segments follow: residues 50-70, 97-117, 131-151, 160-180, 206-226, 234-254, and 264-284; these read PGVSVTAAIQLGSIAAVIAYF, LGFAMVVGTLPILVIGLGIKF, IPSIAIVSIVMALLLALAEQV, VVLGRDGLLVGLAQALALLPG, FLLGIPGITIAGLVELKDALA, LPLLVGIGSAAVVSWLAIDWL, and WLFVAYRLVFGLLLLVWWGVY.

Belongs to the UppP family.

It is found in the cell inner membrane. It carries out the reaction di-trans,octa-cis-undecaprenyl diphosphate + H2O = di-trans,octa-cis-undecaprenyl phosphate + phosphate + H(+). Catalyzes the dephosphorylation of undecaprenyl diphosphate (UPP). Confers resistance to bacitracin. The polypeptide is Undecaprenyl-diphosphatase (Synechococcus sp. (strain CC9605)).